The sequence spans 483 residues: Replication factor C large subunit (483 aa).

43-50 (GKPGIGKT) provides a ligand contact to ATP. Residues 417-442 (ELKKKKKEEDAKGKKARGSKKEKEPI) show a composition bias toward basic and acidic residues. Positions 417–483 (ELKKKKKEED…KSSQSTLFSF (67 aa)) are disordered. The segment covering 448–457 (SIDSFSSQEP) has biased composition (polar residues).

The protein belongs to the activator 1 small subunits family. RfcL subfamily. As to quaternary structure, heteromultimer composed of small subunits (RfcS) and large subunits (RfcL).

Part of the RFC clamp loader complex which loads the PCNA sliding clamp onto DNA. In Methanospirillum hungatei JF-1 (strain ATCC 27890 / DSM 864 / NBRC 100397 / JF-1), this protein is Replication factor C large subunit.